The primary structure comprises 257 residues: Synaptosomal-associated protein 29 (257 aa).

The tract at residues 1 to 42 (MSGYPKSYNPFDDDVEDEDTRPAPWKDARDLPDGPDPPIDRQ) is disordered. Residues 20–32 (TRPAPWKDARDLP) are compositionally biased toward basic and acidic residues. S77, S78, S114, S163, S181, S203, and S209 each carry phosphoserine. The t-SNARE coiled-coil homology domain maps to 195–257 (RAYHQKIDSN…KSTEKKVRQL (63 aa)).

The protein belongs to the SNAP-25 family. In terms of assembly, forms a SNARE complex, composed of VAMP8, SNAP29 and STX17, involved in fusion of autophagosome with lysosome. Interacts with multiple syntaxins including STX6. Interacts with EIPR1. Interacts with STX17; this interaction is increased in the absence of TMEM39A. In terms of tissue distribution, widely expressed.

It is found in the cytoplasm. The protein resides in the golgi apparatus membrane. It localises to the cytoplasmic vesicle. Its subcellular location is the autophagosome membrane. The protein localises to the cell projection. It is found in the cilium membrane. Its function is as follows. SNAREs, soluble N-ethylmaleimide-sensitive factor-attachment protein receptors, are essential proteins for fusion of cellular membranes. SNAREs localized on opposing membranes assemble to form a trans-SNARE complex, an extended, parallel four alpha-helical bundle that drives membrane fusion. SNAP29 is a SNARE involved in autophagy through the direct control of autophagosome membrane fusion with the lysososome membrane. Also plays a role in ciliogenesis by regulating membrane fusions. This chain is Synaptosomal-associated protein 29, found in Rattus norvegicus (Rat).